A 158-amino-acid polypeptide reads, in one-letter code: C-type lection lectoxin-Enh3 (158 aa).

The signal sequence occupies residues 1–23 (MGQFTVVSLGLLAMFLSLSGAKG). 3 disulfides stabilise this stretch: C26/C37, C54/C154, and C129/C146. Residues 33 to 155 (RNGVCNKLFP…CASLHPFICQ (123 aa)) enclose the C-type lectin domain. The short motif at 119–121 (EPN) is the Mannose-binding element. Ca(2+) contacts are provided by E127, N142, and D143.

Belongs to the true venom lectin family. Expressed by the venom gland.

Its subcellular location is the secreted. Mannose-binding lectin which recognizes specific carbohydrate structures and agglutinates a variety of animal cells by binding to cell-surface glycoproteins and glycolipids. May be a calcium-dependent lectin. The sequence is that of C-type lection lectoxin-Enh3 from Pseudoferania polylepis (Macleay's water snake).